Here is a 646-residue protein sequence, read N- to C-terminus: Cell surface glycoprotein MUC18 (646 aa).

The N-terminal stretch at M1–G23 is a signal peptide. Ig-like V-type domains follow at residues V24 to Q129 and P139 to T242. Residues V24–G559 lie on the Extracellular side of the membrane. 4 disulfides stabilise this stretch: C48–C116, C161–C223, C272–C320, and C365–C407. An N-linked (GlcNAc...) asparagine glycan is attached at N56. 3 Ig-like C2-type domains span residues P244–S330, P335–N424, and P430–S510. A disordered region spans residues P278–T299. N418, N449, N467, N508, N518, N527, and N544 each carry an N-linked (GlcNAc...) asparagine glycan. An intrachain disulfide couples C452 to C499. The interval D525–E554 is disordered. Polar residues predominate over residues S533 to S547. Residues V560–Y583 traverse the membrane as a helical segment. At K584–H646 the chain is on the cytoplasmic side. Residues S606, S614, and S628 each carry the phosphoserine modification. The segment at E620–H646 is disordered. The segment covering G629–H646 has biased composition (basic and acidic residues).

As to expression, detected in endothelial cells in vascular tissue throughout the body. May appear at the surface of neural crest cells during their embryonic migration. Appears to be limited to vascular smooth muscle in normal adult tissues. Associated with tumor progression and the development of metastasis in human malignant melanoma. Expressed most strongly on metastatic lesions and advanced primary tumors and is only rarely detected in benign melanocytic nevi and thin primary melanomas with a low probability of metastasis.

It localises to the membrane. Plays a role in cell adhesion, and in cohesion of the endothelial monolayer at intercellular junctions in vascular tissue. Its expression may allow melanoma cells to interact with cellular elements of the vascular system, thereby enhancing hematogeneous tumor spread. Could be an adhesion molecule active in neural crest cells during embryonic development. Acts as a surface receptor that triggers tyrosine phosphorylation of FYN and PTK2/FAK1, and a transient increase in the intracellular calcium concentration. In Homo sapiens (Human), this protein is Cell surface glycoprotein MUC18 (MCAM).